The following is a 299-amino-acid chain: Transcription elongation factor A protein 2 (299 aa).

Residues 5 to 82 enclose the TFIIS N-terminal domain; sequence EEIARIARRL…KSWKKLLDVS (78 aa). A Glycyl lysine isopeptide (Lys-Gly) (interchain with G-Cter in ubiquitin) cross-link involves residue K57. Phosphoserine occurs at positions 59 and 100. The interval 82-127 is disordered; sequence SDGKSRNQGRGTPLPTSSSKDASRTTDLSCKKPDPPRTPSTPRITT. Residues 87 to 101 show a composition bias toward polar residues; sequence RNQGRGTPLPTSSSK. Positions 102 to 116 are enriched in basic and acidic residues; that stretch reads DASRTTDLSCKKPDP. Positions 138 to 254 constitute a TFIIS central domain; that stretch reads VRNKCREMLT…EHQMARTGGT (117 aa). The segment at 257 to 297 adopts a TFIIS-type zinc-finger fold; sequence DLFTCNKCRKKNCTYTQVQTRSSDEPMTTYVVCNECGNRWK. C261, C264, C289, and C292 together coordinate Zn(2+).

The protein belongs to the TFS-II family. Interacts with the basal transcription factor GTF2B. Interacts with REXO1. In terms of tissue distribution, testis and ovary specific. Specific to testicular germ cells.

It is found in the nucleus. Functionally, necessary for efficient RNA polymerase II transcription elongation past template-encoded arresting sites. The arresting sites in DNA have the property of trapping a certain fraction of elongating RNA polymerases that pass through, resulting in locked ternary complexes. Cleavage of the nascent transcript by S-II allows the resumption of elongation from the new 3'-terminus. In Mus musculus (Mouse), this protein is Transcription elongation factor A protein 2 (Tcea2).